Here is a 172-residue protein sequence, read N- to C-terminus: Large ribosomal subunit protein bL21m (172 aa).

Residues 1 to 20 (MIRNIGSNLMKSSSSILLRN) constitute a mitochondrion transit peptide.

Belongs to the bacterial ribosomal protein bL21 family.

It localises to the mitochondrion. This is Large ribosomal subunit protein bL21m (mrpl21) from Dictyostelium discoideum (Social amoeba).